Consider the following 951-residue polypeptide: Multiple C2 and transmembrane domain-containing protein 1 (951 aa).

Disordered regions lie at residues 29-79, 92-117, 129-198, and 210-231; these read LGVG…RWSG, SSSQ…AEQG, LPVA…QKSS, and LEPA…ALQK. Gly residues predominate over residues 31-43; that stretch reads VGKGKGGGGGRAG. The segment covering 147–168 has biased composition (low complexity); that stretch reads PGGRSPDSAPSSSSASSSLSSS. Basic and acidic residues predominate over residues 174-184; the sequence is RGDRVRDESTR. The span at 219–228 shows a compositional bias: low complexity; it reads PARGPAEPQA. C2 domains are found at residues 240–358, 404–521, and 555–676; these read KIST…DVTL, QTQS…KLEL, and QKER…AYVL. Residues Asp-275, Asp-281, Asp-328, Asp-330, Asp-336, Asp-438, Asp-444, Asp-491, Asp-493, Asp-499, Asp-594, Asp-600, Asp-646, Asp-648, and Asp-654 each contribute to the Ca(2+) site. 2 helical membrane-spanning segments follow: residues 763–783 and 866–886; these read FVLF…LLLL and PFLS…LYFI.

The protein belongs to the MCTP family. Ca(2+) is required as a cofactor.

Its subcellular location is the cytoplasmic vesicle. It localises to the secretory vesicle. The protein resides in the synaptic vesicle membrane. The protein localises to the recycling endosome. It is found in the endoplasmic reticulum membrane. In terms of biological role, calcium sensor which is essential for the stabilization of normal baseline neurotransmitter release and for the induction and long-term maintenance of presynaptic homeostatic plasticity. The sequence is that of Multiple C2 and transmembrane domain-containing protein 1 from Mus musculus (Mouse).